We begin with the raw amino-acid sequence, 339 residues long: Phenylalanine--tRNA ligase alpha subunit (339 aa).

Glutamate 254 lines the Mg(2+) pocket.

The protein belongs to the class-II aminoacyl-tRNA synthetase family. Phe-tRNA synthetase alpha subunit type 1 subfamily. In terms of assembly, tetramer of two alpha and two beta subunits. Requires Mg(2+) as cofactor.

The protein resides in the cytoplasm. It carries out the reaction tRNA(Phe) + L-phenylalanine + ATP = L-phenylalanyl-tRNA(Phe) + AMP + diphosphate + H(+). The chain is Phenylalanine--tRNA ligase alpha subunit from Clostridium perfringens (strain SM101 / Type A).